The chain runs to 165 residues: Histone H1-like protein HC2 (165 aa).

Composition is skewed to basic residues over residues 1–50 and 59–80; these read MLGV…KTVA and PVAK…KKTV. Positions 1–80 are disordered; the sequence is MLGVQKKRST…VRKVAAKKTV (80 aa).

This sequence belongs to the histone H1/H5 family. HCT subfamily.

In terms of biological role, might have a role in establishing the nucleoid structure of elementary bodies. The protein is Histone H1-like protein HC2 (hctB) of Chlamydia trachomatis.